Reading from the N-terminus, the 434-residue chain is 3-phosphoshikimate 1-carboxyvinyltransferase (434 aa).

3 residues coordinate 3-phosphoshikimate: K15, S16, and R20. K15 lines the phosphoenolpyruvate pocket. Residues G96 and R124 each contribute to the phosphoenolpyruvate site. Residues S169, Q171, S195, D319, and K346 each coordinate 3-phosphoshikimate. Q171 is a phosphoenolpyruvate binding site. The active-site Proton acceptor is D319. Positions 350 and 394 each coordinate phosphoenolpyruvate.

This sequence belongs to the EPSP synthase family. Monomer.

The protein localises to the cytoplasm. It carries out the reaction 3-phosphoshikimate + phosphoenolpyruvate = 5-O-(1-carboxyvinyl)-3-phosphoshikimate + phosphate. The protein operates within metabolic intermediate biosynthesis; chorismate biosynthesis; chorismate from D-erythrose 4-phosphate and phosphoenolpyruvate: step 6/7. Functionally, catalyzes the transfer of the enolpyruvyl moiety of phosphoenolpyruvate (PEP) to the 5-hydroxyl of shikimate-3-phosphate (S3P) to produce enolpyruvyl shikimate-3-phosphate and inorganic phosphate. The polypeptide is 3-phosphoshikimate 1-carboxyvinyltransferase (Chlorobaculum parvum (strain DSM 263 / NCIMB 8327) (Chlorobium vibrioforme subsp. thiosulfatophilum)).